We begin with the raw amino-acid sequence, 249 residues long: 5'-nucleotidase SurE (249 aa).

A divalent metal cation contacts are provided by aspartate 8, aspartate 9, serine 39, and asparagine 91.

This sequence belongs to the SurE nucleotidase family. A divalent metal cation is required as a cofactor.

The protein resides in the cytoplasm. The enzyme catalyses a ribonucleoside 5'-phosphate + H2O = a ribonucleoside + phosphate. Functionally, nucleotidase that shows phosphatase activity on nucleoside 5'-monophosphates. The protein is 5'-nucleotidase SurE of Pseudomonas putida (strain ATCC 700007 / DSM 6899 / JCM 31910 / BCRC 17059 / LMG 24140 / F1).